The chain runs to 234 residues: UPF0502 protein Bphy_5360 (234 aa).

It belongs to the UPF0502 family.

The sequence is that of UPF0502 protein Bphy_5360 from Paraburkholderia phymatum (strain DSM 17167 / CIP 108236 / LMG 21445 / STM815) (Burkholderia phymatum).